Here is a 335-residue protein sequence, read N- to C-terminus: Probable tRNA N6-adenosine threonylcarbamoyltransferase (335 aa).

A divalent metal cation contacts are provided by His-109, His-113, and Tyr-130. Substrate-binding positions include 130 to 134 (YVSGG), Asp-162, Gly-177, Glu-181, and Asn-266. A divalent metal cation is bound at residue Asp-294.

This sequence belongs to the KAE1 / TsaD family. As to quaternary structure, component of the EKC/KEOPS complex; the whole complex dimerizes. A divalent metal cation is required as a cofactor.

It is found in the cytoplasm. The protein localises to the nucleus. The catalysed reaction is L-threonylcarbamoyladenylate + adenosine(37) in tRNA = N(6)-L-threonylcarbamoyladenosine(37) in tRNA + AMP + H(+). Component of the EKC/KEOPS complex that is required for the formation of a threonylcarbamoyl group on adenosine at position 37 (t(6)A37) in tRNAs that read codons beginning with adenine. The complex is probably involved in the transfer of the threonylcarbamoyl moiety of threonylcarbamoyl-AMP (TC-AMP) to the N6 group of A37. Osgep likely plays a direct catalytic role in this reaction, but requires other protein(s) of the complex to fulfill this activity. The sequence is that of Probable tRNA N6-adenosine threonylcarbamoyltransferase from Nematostella vectensis (Starlet sea anemone).